Reading from the N-terminus, the 617-residue chain is UvrABC system protein C (617 aa).

The GIY-YIG domain occupies 22-100 (NLPGVYRFFN…IKALSPKYNI (79 aa)). Residues 209 to 244 (DELTRTLQHKMQTAAANLQFEEAARYRDQIQALGIM) enclose the UVR domain.

This sequence belongs to the UvrC family. As to quaternary structure, interacts with UvrB in an incision complex.

Its subcellular location is the cytoplasm. The UvrABC repair system catalyzes the recognition and processing of DNA lesions. UvrC both incises the 5' and 3' sides of the lesion. The N-terminal half is responsible for the 3' incision and the C-terminal half is responsible for the 5' incision. This Neisseria meningitidis serogroup B (strain ATCC BAA-335 / MC58) protein is UvrABC system protein C.